The sequence spans 79 residues: Anti-insect Ac4 (79 aa).

The signal sequence occupies residues 1-17 (MISLSLLLMIGVESVRD). One can recognise an LCN-type CS-alpha/beta domain in the interval 18–77 (GYIVDFKNCVYRCVPPCDGLCKKNGGKGGSCSFLIGSGLACWCNALPDNVPIKDPLHKCP). Disulfide bonds link Cys-26/Cys-76, Cys-30/Cys-48, Cys-34/Cys-58, and Cys-38/Cys-60.

It belongs to the long (4 C-C) scorpion toxin superfamily. Sodium channel inhibitor family. Alpha subfamily. In terms of tissue distribution, expressed by the venom gland.

The protein localises to the secreted. Its function is as follows. Alpha toxins bind voltage-independently at site-3 of sodium channels (Nav) and inhibit the inactivation of the activated channels, thereby blocking neuronal transmission. This protein is weakly toxic against insects (ED(50)&gt;2 ug per 100 mg of blowfly larvae), but is inactive against mammalian sodium channels (rNav1.2a, and rNav1.4). In Androctonus crassicauda (Arabian fat-tailed scorpion), this protein is Anti-insect Ac4.